The primary structure comprises 159 residues: Ribosomal RNA large subunit methyltransferase H (159 aa).

Positions 76 and 108 each coordinate S-adenosyl-L-methionine.

It belongs to the RNA methyltransferase RlmH family. Homodimer.

It is found in the cytoplasm. It catalyses the reaction pseudouridine(1915) in 23S rRNA + S-adenosyl-L-methionine = N(3)-methylpseudouridine(1915) in 23S rRNA + S-adenosyl-L-homocysteine + H(+). Specifically methylates the pseudouridine at position 1915 (m3Psi1915) in 23S rRNA. The chain is Ribosomal RNA large subunit methyltransferase H from Natranaerobius thermophilus (strain ATCC BAA-1301 / DSM 18059 / JW/NM-WN-LF).